Reading from the N-terminus, the 417-residue chain is NADH-quinone oxidoreductase subunit D (417 aa).

Belongs to the complex I 49 kDa subunit family. NDH-1 is composed of 14 different subunits. Subunits NuoB, C, D, E, F, and G constitute the peripheral sector of the complex.

The protein resides in the cell inner membrane. The enzyme catalyses a quinone + NADH + 5 H(+)(in) = a quinol + NAD(+) + 4 H(+)(out). In terms of biological role, NDH-1 shuttles electrons from NADH, via FMN and iron-sulfur (Fe-S) centers, to quinones in the respiratory chain. The immediate electron acceptor for the enzyme in this species is believed to be ubiquinone. Couples the redox reaction to proton translocation (for every two electrons transferred, four hydrogen ions are translocated across the cytoplasmic membrane), and thus conserves the redox energy in a proton gradient. The sequence is that of NADH-quinone oxidoreductase subunit D from Francisella philomiragia subsp. philomiragia (strain ATCC 25017 / CCUG 19701 / FSC 153 / O#319-036).